We begin with the raw amino-acid sequence, 394 residues long: Tubulin-like protein CetZ4 (394 aa).

GTP-binding positions include 10–14, 110–112, Glu142, Asn169, and Asn187; these read QAGGK and GTG.

The protein belongs to the CetZ family.

It is found in the cytoplasm. Functionally, involved in cell shape control. In Haloferax volcanii (strain ATCC 29605 / DSM 3757 / JCM 8879 / NBRC 14742 / NCIMB 2012 / VKM B-1768 / DS2) (Halobacterium volcanii), this protein is Tubulin-like protein CetZ4.